Reading from the N-terminus, the 664-residue chain is MKRINILNEDTANKIAAGEVVERPASVVKELIENSIDANAKNIIIEIEEGGISLIRIIDDGDGIYKDDIAKAFLPHATSKIQESEDIYNIHTLGFRGEALPSIASVGKVNLKSKQDEEAFGYEISIEGGKASEVTECGINKGTILEVQDLFFNVPARKKFLKSVSKESSLINDIVTRLSLANPKISFKLYNNHKKVLHTFGNGDLKDVIRTIYGKSITDNILYFSDSSDLITVYGYVGTEEIARGSRNNQSIFVNRRYIKNRALAIAVEQAFKSFSTVNKFPFFILFIEVYPEYVDVNIHPTKAEIKFNDERMIFKKIFGAVHTALKNEVFETFAIKEEENTKKEPLPTFEEITFKIKEEEEKVKFASSAAKTLISQGKDLKANNESSFKSVYDPSLNNINKTIVEESTDYNKENEEPISIPVDLKPNSYIENLVDDYSDNAEDEIKSNSEPIENVITENKYENIKPNPIAKFPPITIIGQYNKTYILGEYDGTLYMIDQHAAHEKILFEKYLKEIEEGTIIIQPLIVPSIIDLSIDDYSYFEENKDIFREAGFLLEEFGGSSLSLKEVPYFLGRLNPKNLFLDILDNLKNLGNGKTSEVKHNAIATKACKAAIKGNDKLEMNEMIKLIEDLRYIDDPFHCPHGRPVIIKFTSIDIDKKFKRII.

This sequence belongs to the DNA mismatch repair MutL/HexB family.

In terms of biological role, this protein is involved in the repair of mismatches in DNA. It is required for dam-dependent methyl-directed DNA mismatch repair. May act as a 'molecular matchmaker', a protein that promotes the formation of a stable complex between two or more DNA-binding proteins in an ATP-dependent manner without itself being part of a final effector complex. The chain is DNA mismatch repair protein MutL from Clostridium beijerinckii (strain ATCC 51743 / NCIMB 8052) (Clostridium acetobutylicum).